The chain runs to 123 residues: MDKIEELKIEELKIEIPQRKTKFFHDSENSDKRDEEETLNPTITSKAKILIKSKNFWIETLIFVISVFGALCVAFGIMLIGFLLWLVSNTISILYFIKQKQYPLSLQQMVFLITTCIGVYNNV.

The next 2 membrane-spanning stretches (helical) occupy residues 67–87 (VFGA…LWLV) and 104–121 (LSLQ…GVYN).

It localises to the membrane. The chain is Transmembrane protein 049L from Acheta domesticus (House cricket).